Here is a 156-residue protein sequence, read N- to C-terminus: Hydrogenase 3 maturation protease (156 aa).

Residues D16, D62, and H90 each coordinate Ni(2+).

Belongs to the peptidase A31 family. Monomer.

It catalyses the reaction This enzyme specifically removes a 32-amino acid peptide from the C-terminus of the precursor of the large subunit of E.coli hydrogenase 3 by cleavage at the C-terminal side of Arg-537.. Its function is as follows. Protease involved in the C-terminal processing of HycE, the large subunit of hydrogenase 3. The chain is Hydrogenase 3 maturation protease (hycI) from Escherichia coli O157:H7.